The sequence spans 351 residues: tRNA-specific 2-thiouridylase MnmA (351 aa).

Residues 7–14 (GLSGGVDS) and Leu33 each bind ATP. The active-site Nucleophile is Cys94. Cys94 and Cys193 are oxidised to a cystine. Gly119 is a binding site for ATP. An interaction with tRNA region spans residues 143 to 145 (KDQ). Cys193 serves as the catalytic Cysteine persulfide intermediate. The tract at residues 298–299 (RY) is interaction with tRNA.

This sequence belongs to the MnmA/TRMU family.

The protein localises to the cytoplasm. The enzyme catalyses S-sulfanyl-L-cysteinyl-[protein] + uridine(34) in tRNA + AH2 + ATP = 2-thiouridine(34) in tRNA + L-cysteinyl-[protein] + A + AMP + diphosphate + H(+). Its function is as follows. Catalyzes the 2-thiolation of uridine at the wobble position (U34) of tRNA, leading to the formation of s(2)U34. The sequence is that of tRNA-specific 2-thiouridylase MnmA from Nostoc punctiforme (strain ATCC 29133 / PCC 73102).